Reading from the N-terminus, the 605-residue chain is Protein spinster (605 aa).

The segment at 1 to 94 (MSLKHQKQSY…HPLGEHHHIP (94 aa)) is disordered. The span at 27-38 (SSGSSGSSSSEE) shows a compositional bias: low complexity. Over residues 55–67 (TTYSSQQLMPSDT) the composition is skewed to polar residues. The span at 76–85 (RLRPHHHHHH) shows a compositional bias: basic residues. A helical membrane pass occupies residues 115–137 (FTVTVLCFVNLINYMDRFTIAGV). The N-linked (GlcNAc...) asparagine glycan is linked to asparagine 149. Helical transmembrane passes span 153–173 (GLLQ…FGYL), 180–200 (PWIM…GSFM), 203–223 (FGWF…YSTI), 240–260 (MLAL…IVGS), and 271–291 (WALR…LLIK). Asparagine 319 carries N-linked (GlcNAc...) asparagine glycosylation. A run of 5 helical transmembrane segments spans residues 329–349 (FTCV…FIYL), 367–387 (FNFG…GSFL), 401–421 (VICA…CLLV), 431–451 (LIFF…DILL), and 465–485 (FQIL…VGAI). A glycan (N-linked (GlcNAc...) asparagine) is linked at asparagine 519. The chain crosses the membrane as a helical span at residues 558 to 578 (STSFVEVLGGIFFIFTACFII). A glycan (N-linked (GlcNAc...) asparagine) is linked at asparagine 583.

The protein belongs to the major facilitator superfamily. Spinster (TC 2.A.1.49) family. As to expression, enriched in brain (at protein level).

It localises to the late endosome membrane. Its subcellular location is the lysosome membrane. Probable sphingolipid transporter that plays a central role in endosomes and/or lysosomes storage. Involved in TGF-beta-mediated synaptic growth regulation both pre- and postsynaptically via its function in endosomal storage regulation. Also required during oogenesis by regulating yolk spheres storage. The polypeptide is Protein spinster (spin) (Drosophila melanogaster (Fruit fly)).